Here is a 1261-residue protein sequence, read N- to C-terminus: Apoptotic protease-activating factor 1 (1261 aa).

The 90-residue stretch at 1–90 (MEERARSRLL…GDLASLLHSD (90 aa)) folds into the CARD domain. Residues 106 to 417 (VSPSVQAILS…LELEEVEDVL (312 aa)) enclose the NB-ARC domain. 154–161 (GMAGSGKS) is an ATP binding site. WD repeat units lie at residues 615 to 654 (PHQG…KLLE), 657 to 696 (AHEE…LIRE), 700 to 743 (EHEE…SQNT), 746 to 785 (GHME…EWKS), 798 to 836 (EIKA…LLLK), 840 to 879 (SRLS…KKAE), 882 to 921 (GHLS…TSSA), 964 to 1003 (ELSS…ASVK), 1006 to 1045 (GHTK…CMVL), 1047 to 1088 (GHME…MLQD), 1091 to 1130 (CHEG…MLFL), 1133 to 1172 (GHKD…LLKI), and 1184 to 1223 (YHAG…QTFY).

Monomer. Oligomerizes upon binding of cytochrome c and dATP.

Its subcellular location is the cytoplasm. Oligomeric Apaf-1 mediates the cytochrome c-dependent autocatalytic activation of pro-caspase-9 (Apaf-3), leading to the activation of caspase-3 and apoptosis. This activation requires ATP. The sequence is that of Apoptotic protease-activating factor 1 (apaf1) from Danio rerio (Zebrafish).